The primary structure comprises 141 residues: Ribonuclease VapC2 (141 aa).

One can recognise a PINc domain in the interval 7 to 129 (LIDKSALVRL…FDAIAALTGQ (123 aa)). Positions 99, 117, and 119 each coordinate Mg(2+).

This sequence belongs to the PINc/VapC protein family. Probably active as a homodimer. Requires Mg(2+) as cofactor.

In terms of biological role, toxic component of a type II toxin-antitoxin (TA) system. Acts as an RNase. All its toxic effects are neutralized by coexpression with cognate antitoxin VapB2. In Mycobacterium tuberculosis (strain CDC 1551 / Oshkosh), this protein is Ribonuclease VapC2.